The sequence spans 312 residues: Chitin deacetylase 2 (312 aa).

The N-terminal stretch at methionine 1 to arginine 44 is a signal peptide. A disulfide bridge connects residues cysteine 117 and cysteine 300. One can recognise a NodB homology domain in the interval serine 118–isoleucine 307. The active-site Proton acceptor is aspartate 125. Acetate is bound at residue aspartate 125. Position 126 (aspartate 126) interacts with Co(2+). Residue asparagine 142 is glycosylated (N-linked (GlcNAc...) asparagine). Residues histidine 172 and histidine 176 each contribute to the Co(2+) site. N-linked (GlcNAc...) asparagine glycosylation is found at asparagine 181 and asparagine 199. Tyrosine 213 is a binding site for acetate. Asparagine 246 and asparagine 263 each carry an N-linked (GlcNAc...) asparagine glycan. Residue histidine 273 is the Proton donor of the active site.

This sequence belongs to the polysaccharide deacetylase family. Monomer. It depends on Co(2+) as a cofactor. N-glycosylated.

Its subcellular location is the prospore. It catalyses the reaction [(1-&gt;4)-N-acetyl-beta-D-glucosaminyl](n) + n H2O = chitosan + n acetate. In terms of biological role, hydrolyzes the N-acetamido groups of N-acetyl-D-glucosamine residues in chitin to form chitosan and acetate. Chitosan is a component of the spore wall. The polypeptide is Chitin deacetylase 2 (Saccharomyces cerevisiae (strain ATCC 204508 / S288c) (Baker's yeast)).